The following is a 480-amino-acid chain: Bifunctional pantoate ligase/cytidylate kinase (480 aa).

The segment at 1 to 243 (MPTMGGLHQG…CGTTRLIDHV (243 aa)) is pantoate--beta-alanine ligase. 4–11 (MGGLHQGH) contacts ATP. Residue His11 is the Proton donor of the active site. Residue Gln34 coordinates (R)-pantoate. Position 34 (Gln34) interacts with beta-alanine. Position 123-126 (123-126 (GEKD)) interacts with ATP. Gln129 provides a ligand contact to (R)-pantoate. Residues Val152 and 160 to 163 (LSSR) contribute to the ATP site. Residues 244-480 (FLMTRQPLVA…GEEAWPTPAG (237 aa)) are cytidylate kinase.

In the N-terminal section; belongs to the pantothenate synthetase family. The protein in the C-terminal section; belongs to the cytidylate kinase family. Type 1 subfamily.

Its subcellular location is the cytoplasm. The catalysed reaction is (R)-pantoate + beta-alanine + ATP = (R)-pantothenate + AMP + diphosphate + H(+). It carries out the reaction CMP + ATP = CDP + ADP. The enzyme catalyses dCMP + ATP = dCDP + ADP. Its pathway is cofactor biosynthesis; (R)-pantothenate biosynthesis; (R)-pantothenate from (R)-pantoate and beta-alanine: step 1/1. Catalyzes the condensation of pantoate with beta-alanine in an ATP-dependent reaction via a pantoyl-adenylate intermediate. In terms of biological role, catalyzes the transfer of a phosphate group from ATP to either CMP or dCMP to form CDP or dCDP and ADP, respectively. The chain is Bifunctional pantoate ligase/cytidylate kinase from Synechococcus sp. (strain CC9605).